The primary structure comprises 181 residues: Inner membrane-spanning protein YciB (181 aa).

5 consecutive transmembrane segments (helical) span residues 22-42, 50-70, 80-100, 118-138, and 148-168; these read IYTA…LTYV, MQLI…FLHD, IVYA…RPII, INYA…YVAF, and FKVF…GMYV.

It belongs to the YciB family.

The protein localises to the cell inner membrane. Its function is as follows. Plays a role in cell envelope biogenesis, maintenance of cell envelope integrity and membrane homeostasis. The protein is Inner membrane-spanning protein YciB of Aliivibrio salmonicida (strain LFI1238) (Vibrio salmonicida (strain LFI1238)).